The sequence spans 95 residues: Small ribosomal subunit protein bS6 (95 aa).

This sequence belongs to the bacterial ribosomal protein bS6 family.

Its function is as follows. Binds together with bS18 to 16S ribosomal RNA. This Exiguobacterium sp. (strain ATCC BAA-1283 / AT1b) protein is Small ribosomal subunit protein bS6.